The primary structure comprises 1006 residues: E3 ubiquitin-protein ligase MIB1 (1006 aa).

An MIB/HERC2 1 domain is found at 6 to 74 (NNRVMVEGVG…AYDLRILDSA (69 aa)). The ZZ-type zinc-finger motif lies at 80 to 132 (HDGTMCDTCRQQPIIGIRWKCAECTNYDLCTVCYHGDKHHLRHRFYRITTPGS). Cys-85, Cys-88, Cys-100, Cys-103, Cys-109, Cys-112, His-118, and His-122 together coordinate Zn(2+). The MIB/HERC2 2 domain occupies 143 to 221 (SKKITARGIF…MSDLKCVQDA (79 aa)). Position 408 is a phosphoserine (Ser-408). 9 ANK repeats span residues 430–460 (DLNE…DVNG), 463–492 (AGHT…DVEA), 496–525 (DGDR…DLNA), 529–558 (RRQT…HPSL), 562–591 (EGDT…DVTI), 595–627 (NGFN…IVDE), 631–661 (DGYT…NLDI), 665–694 (NQQT…KLDI), and 698–729 (DGDT…KVDA). 2 consecutive RING-type zinc fingers follow at residues 819–854 (CMVC…LICK) and 866–901 (CVVC…VQCR). The stretch at 935–962 (QKDKDNTNVNADVQKLQQQLQDIKEQTM) forms a coiled coil. The segment at 963 to 996 (CPVCLDRLKNMIFLCGHGTCQLCGDRMSECPICR) adopts an RING-type 3 zinc-finger fold.

Interacts with CEP131 and PCM1. Post-translationally, ubiquitinated; this modification is inhibited in response to cellular stress, such as ultraviolet light (UV) radiation or heat shock. Ubiquitinated; possibly via autoubiquitination. As to expression, detected in all tissues tested. Present in embryo, embryonic stem cells, bladder, skeletal muscle, bladder, uterus, testis, stomach, colon, ileum, trachea, lung, aorta, kidney, spleen, liver and vas deferens (at protein level). Highly expressed in testis.

It localises to the cytoplasm. Its subcellular location is the cytoskeleton. It is found in the microtubule organizing center. The protein localises to the centrosome. The protein resides in the centriolar satellite. It localises to the cell membrane. The enzyme catalyses S-ubiquitinyl-[E2 ubiquitin-conjugating enzyme]-L-cysteine + [acceptor protein]-L-lysine = [E2 ubiquitin-conjugating enzyme]-L-cysteine + N(6)-ubiquitinyl-[acceptor protein]-L-lysine.. It participates in protein modification; protein ubiquitination. In terms of biological role, E3 ubiquitin-protein ligase that mediates ubiquitination of Delta receptors, which act as ligands of Notch proteins. Positively regulates the Delta-mediated Notch signaling by ubiquitinating the intracellular domain of Delta, leading to endocytosis of Delta receptors. Involved in ubiquitination of centriolar satellite CEP131, CEP290 and PCM1 proteins and hence inhibits primary cilium formation in proliferating cells. Mediates 'Lys-63'-linked polyubiquitination of TBK1, which probably participates in kinase activation. Probably mediates ubiquitination and subsequent proteasomal degradation of DAPK1, thereby antagonizing anti-apoptotic effects of DAPK1 to promote TNF-induced apoptosis. This chain is E3 ubiquitin-protein ligase MIB1 (Mib1), found in Mus musculus (Mouse).